We begin with the raw amino-acid sequence, 226 residues long: MMTNLFSVFDPSTTILNLSLNWLSTFLGLLLIPFSFWLLPNRFQVVWNNILLTLHKEFKTLLGPSGHNGSTLMFISLFSLIMFNNFLGLFPYIFTSTSHLTLTLALAFPLWLSFMLYGWINHTQHMFAHLVPQGTPPVLMPFMVCIETISNVIRPGTLAVRLTANMIAGHLLLTLLGNTGPMTTNYIILSLILTTQIALLVLESAVAIIQSYVFAVLSTLYSSEVN.

5 helical membrane passes run Leu20–Pro40, Phe74–Phe94, Leu100–Ile120, Leu158–Gly180, and Ile197–Leu217.

It belongs to the ATPase A chain family. In terms of assembly, F-type ATPases have 2 components, CF(1) - the catalytic core - and CF(0) - the membrane proton channel. CF(1) has five subunits: alpha(3), beta(3), gamma(1), delta(1), epsilon(1). CF(0) has three main subunits: a, b and c.

It is found in the mitochondrion inner membrane. Functionally, mitochondrial membrane ATP synthase (F(1)F(0) ATP synthase or Complex V) produces ATP from ADP in the presence of a proton gradient across the membrane which is generated by electron transport complexes of the respiratory chain. F-type ATPases consist of two structural domains, F(1) - containing the extramembraneous catalytic core and F(0) - containing the membrane proton channel, linked together by a central stalk and a peripheral stalk. During catalysis, ATP synthesis in the catalytic domain of F(1) is coupled via a rotary mechanism of the central stalk subunits to proton translocation. Key component of the proton channel; it may play a direct role in the translocation of protons across the membrane. The protein is ATP synthase subunit a (ATP6) of Anopheles quadrimaculatus (Common malaria mosquito).